The sequence spans 328 residues: D-cysteine desulfhydrase (328 aa).

Lysine 51 carries the N6-(pyridoxal phosphate)lysine modification.

The protein belongs to the ACC deaminase/D-cysteine desulfhydrase family. In terms of assembly, homodimer. It depends on pyridoxal 5'-phosphate as a cofactor.

The catalysed reaction is D-cysteine + H2O = hydrogen sulfide + pyruvate + NH4(+) + H(+). Its function is as follows. Catalyzes the alpha,beta-elimination reaction of D-cysteine and of several D-cysteine derivatives. It could be a defense mechanism against D-cysteine. This chain is D-cysteine desulfhydrase, found in Escherichia fergusonii (strain ATCC 35469 / DSM 13698 / CCUG 18766 / IAM 14443 / JCM 21226 / LMG 7866 / NBRC 102419 / NCTC 12128 / CDC 0568-73).